Reading from the N-terminus, the 477-residue chain is Homospermidine synthase (477 aa).

This sequence belongs to the saccharopine dehydrogenase family. Homodimer. NAD(+) serves as cofactor.

It carries out the reaction 2 putrescine = sym-homospermidine + NH4(+). The enzyme catalyses putrescine + spermidine = sym-homospermidine + propane-1,3-diamine. Involved in the NAD(+)-dependent synthesis of the polyamine homospermidine from putrescine. This is Homospermidine synthase (hss) from Blastochloris viridis (Rhodopseudomonas viridis).